The following is a 1414-amino-acid chain: DNA-directed RNA polymerase subunit beta' (1414 aa).

4 residues coordinate Zn(2+): Cys70, Cys72, Cys85, and Cys88. Mg(2+) is bound by residues Asp460, Asp462, and Asp464. Residues Cys814, Cys888, Cys895, and Cys898 each contribute to the Zn(2+) site. Positions 1392 to 1403 (EQALSEALKSSA) are enriched in low complexity. The tract at residues 1392–1414 (EQALSEALKSSAPQEAKAAQKDE) is disordered.

Belongs to the RNA polymerase beta' chain family. The RNAP catalytic core consists of 2 alpha, 1 beta, 1 beta' and 1 omega subunit. When a sigma factor is associated with the core the holoenzyme is formed, which can initiate transcription. Requires Mg(2+) as cofactor. Zn(2+) serves as cofactor.

It catalyses the reaction RNA(n) + a ribonucleoside 5'-triphosphate = RNA(n+1) + diphosphate. Its function is as follows. DNA-dependent RNA polymerase catalyzes the transcription of DNA into RNA using the four ribonucleoside triphosphates as substrates. This chain is DNA-directed RNA polymerase subunit beta', found in Coxiella burnetii (strain RSA 331 / Henzerling II).